We begin with the raw amino-acid sequence, 280 residues long: Protease HtpX (280 aa).

2 helical membrane passes run 7-26 (TFILLASLTALLVVIGGLLG) and 30-49 (GMLIALVFAGVMNFSAYWYS). Residue histidine 129 participates in Zn(2+) binding. Residue glutamate 130 is part of the active site. Histidine 133 contributes to the Zn(2+) binding site. The next 2 membrane-spanning stretches (helical) occupy residues 146 to 166 (ATIAGAISGIANMFMWLSMFG) and 178 to 198 (VVGMIMMIVAPLAAGLIQMAI). Glutamate 203 serves as a coordination point for Zn(2+).

This sequence belongs to the peptidase M48B family. Requires Zn(2+) as cofactor.

It localises to the cell inner membrane. The polypeptide is Protease HtpX (Legionella pneumophila subsp. pneumophila (strain Philadelphia 1 / ATCC 33152 / DSM 7513)).